The chain runs to 766 residues: Darlin (766 aa).

ARM repeat units follow at residues 82-119 (QLFEFLLPNGVETLNTDTTVEQSELFSMVCRLLGNLTY), 167-208 (DFIQ…NLVD), 423-464 (EPNC…NLTL), and 465-537 (PTIN…ASMD). A disordered region spans residues 561–585 (EEKEKTIEKTDEKTDEKTNEKKQSK). The stretch at 610–649 (HQEKMKQLIEESVEPFFSLLQSPFPILQVEGAKGLVLLIK) is one ARM 5 repeat.

It belongs to the RAP1GDS1 family. In terms of assembly, binds to small GTPases racE, racC but not rab21. Binds preferentially to GDP-bound racE.

Its function is as follows. Part of a signaling pathway that initiates the aggregation and leads to the formation of aggregation centers or streams. Not essential for cytokinesis, pinocytosis or phagocytosis. Not essential for development, except in starvation-induced aggregation. In Dictyostelium discoideum (Social amoeba), this protein is Darlin (darA).